A 272-amino-acid chain; its full sequence is Insulin-like growth factor-binding protein 5 (272 aa).

A signal peptide spans 1-20 (MVLLTAVLLLLAAYAGPAQS). In terms of domain architecture, IGFBP N-terminal spans 23–103 (SFVHCEPCDE…LHGRGVCLNE (81 aa)). 6 cysteine pairs are disulfide-bonded: Cys-27-Cys-53, Cys-30-Cys-55, Cys-38-Cys-56, Cys-45-Cys-59, Cys-67-Cys-80, and Cys-74-Cys-100. Residues 111-122 (KIERDSREHEEP) are compositionally biased toward basic and acidic residues. Residues 111-130 (KIERDSREHEEPTTSEMAEE) are disordered. Residue Ser-116 is modified to Phosphoserine; by FAM20C. The O-linked (HexNAc...) threonine glycan is linked to Thr-172. The Thyroglobulin type-1 domain maps to 189–263 (QGPCRRHMEA…MEYVDGDFQC (75 aa)). 3 disulfide bridges follow: Cys-192/Cys-219, Cys-230/Cys-241, and Cys-243/Cys-263.

Interacts with IGF1; this interaction enhances the growth stimulatory effects of IGF1 on fibroblasts. Interacts with CAV1; this interaction allows trafficking of IGFBP5 from the plasma membrane to the nucleus. Interacts with NCL; this interaction is necessary for IGFBP5 localization to the nucleus. In terms of processing, cleaved by C1S in extracellular space. Osteosarcoma, and at lower levels in liver, kidney and brain.

It is found in the secreted. It localises to the cytoplasm. Its subcellular location is the nucleus. Functionally, multifunctional protein that plays a critical role in regulating the availability of IGFs to their receptors and thereby regulates IGF-mediated cellular processes including proliferation, differentiation, and apoptosis in a cell-type specific manner. Increases the cell proliferation of osteoblasts, intestinal smooth muscle cells and neuroblastoma cells. Enhances adhesion and survival of epithelial cells but decreases adhesion of mesenchymal cells. Once secreted, acts as a major mediator of mTORC1-dependent feedback inhibition of IGF1 signaling. Also plays a role in the induction of extracellular matrix (ECM) production and deposition independently of its nuclear translocation and binding to IGFs. Acts itself as a growth factor that can act independently of IGFs to regulate bone formation. Acts as a ligand for the ROR1 receptor which triggers formation of ROR1/HER2 heterodimer to enhance CREB oncogenic signaling. This chain is Insulin-like growth factor-binding protein 5 (IGFBP5), found in Homo sapiens (Human).